Here is a 322-residue protein sequence, read N- to C-terminus: D-specific alpha-keto acid dehydrogenase (322 aa).

NAD(+) contacts are provided by residues 156 to 157, 229 to 231, and Asp-255; these read QI and TGR. Arg-231 is a catalytic residue. Glu-260 is a catalytic residue. The active-site Proton donor is His-292. 292–295 lines the NAD(+) pocket; it reads HTAY.

It belongs to the D-isomer specific 2-hydroxyacid dehydrogenase family.

The enzyme catalyses a (2R)-2-hydroxycarboxylate + NADP(+) = a 2-oxocarboxylate + NADPH + H(+). It catalyses the reaction a (2R)-2-hydroxycarboxylate + NAD(+) = a 2-oxocarboxylate + NADH + H(+). The catalysed reaction is (R)-lactate + NADP(+) = pyruvate + NADPH + H(+). It carries out the reaction (R)-lactate + NAD(+) = pyruvate + NADH + H(+). The enzyme catalyses (2R)-hydroxybutanoate + NADP(+) = 2-oxobutanoate + NADPH + H(+). Its function is as follows. Required for high-level resistance to glycopeptide antibiotics. Catalyzes the reduction of 2-keto acids to 2-D-hydroxy acids, exhibiting highest catalytic efficiency with pyruvate and 2-oxobutanoate/alpha-ketobutyrate as substrates, producing D-lactate and (2R)-hydroxybutanoate, respectively. Together with D-alanine--D-lactate ligase VanA, gives rise to peptidoglycan precursors that terminate in the depsipeptide D-alanine-D-lactate rather than the dipeptide D-alanine-D-alanine thus preventing vancomycin binding. Shows a slight preference for NADPH over NADH as the electron donor. This Enterococcus faecium (Streptococcus faecium) protein is D-specific alpha-keto acid dehydrogenase.